The following is a 361-amino-acid chain: MQKKILEYLKRLEEVEVEISNPEIFNNPKEYSLLSKEHARLSELKNTYDRVMAQEKVLSDDKQALAQEKDPEMIAMLEEGIQSGKAEVEKLYKILENLLVPPDPDDDLNVIMELRAGTGGDEAALFVGDCVRMYHLYASAKGWKYEVLSASESDIGGYKEYVMGISGTGVKRLLQYEAGTHRVQRVPETETQGRVHTSAITVAVLPEPAEDDEEVFIDEKDLKIDTFRASGAGGQHVNVTDSAVRITHLPTGVVVTCQDERSQHKNKAKAMRILKARIRDAEIQRRHKEASAMRSAQVGSGDRSERIRTYNFSQNRVTDHRIGLTLYSLDKVMEGDLDTITSALVSHAYHQLLQNGNEENS.

Glutamine 235 is modified (N5-methylglutamine).

Belongs to the prokaryotic/mitochondrial release factor family. In terms of processing, methylated by PrmC. Methylation increases the termination efficiency of RF1.

It is found in the cytoplasm. Peptide chain release factor 1 directs the termination of translation in response to the peptide chain termination codons UAG and UAA. This is Peptide chain release factor 1 from Chlamydia abortus (strain DSM 27085 / S26/3) (Chlamydophila abortus).